A 419-amino-acid chain; its full sequence is MLGIITFIIIFGILVIVHEFGHFYFAKKSGILVREFAIGMGPKIFSHVDQGGTLYTLRMLPLGGYVRMAGWGDDKTEIKTGTPASLTLNEQGFVKRINLSQSKLDPTSLPMHVTGYDLEDQLSITGLVLEETKTYKVAHDATIVEEDGTEIRIAPLDVQYQNASIGGRLITNFAGPMNNFILGIVVFILLVFLQGGMPDFSSNHVRVQENGAAAKAGLRDNDQIVAINGYKVNSWNDLTEAVNLATRDLGPSQTIKVTYKSHQRLKTVAVKPQKHAKTYTIGVKASLKTGFKDKLLGGLELAWSGAFTILNALKGLITGFSLNKLGGPVAMYDMSNQAAQNGLESVLSLMAMLSINLGIFNLIPIPALDGGKILMNIIEAIRRKPIKQETEAYITLAGVAIMVVLMIAVTWNDIMRVFF.

Position 18 (histidine 18) interacts with Zn(2+). Glutamate 19 is a catalytic residue. Position 22 (histidine 22) interacts with Zn(2+). A run of 4 helical transmembrane segments spans residues 169 to 191 (LITNFAGPMNNFILGIVVFILLV), 301 to 323 (LAWSGAFTILNALKGLITGFSLN), 343 to 365 (LESVLSLMAMLSINLGIFNLIPI), and 392 to 411 (AYITLAGVAIMVVLMIAVTW). Positions 175-274 (GPMNNFILGI…LKTVAVKPQK (100 aa)) constitute a PDZ domain.

The protein belongs to the peptidase M50B family. It depends on Zn(2+) as a cofactor.

The protein resides in the cell membrane. The polypeptide is Putative zinc metalloprotease SPs1691 (eep) (Streptococcus pyogenes serotype M3 (strain SSI-1)).